A 413-amino-acid chain; its full sequence is Multidrug resistance protein MdtA (413 aa).

The N-terminal stretch at 1 to 20 (MKGSNTFRWAIAIGVVVAAA) is a signal peptide. Disordered stretches follow at residues 31–57 (SPTA…RDGP) and 391–413 (EPQT…GARA). A compositionally biased stretch (basic and acidic residues) spans 397-413 (ADEKSPSRHEGQKGARA).

Belongs to the membrane fusion protein (MFP) (TC 8.A.1) family. In terms of assembly, part of a tripartite efflux system composed of MdtA, MdtB and MdtC.

It is found in the cell inner membrane. The chain is Multidrug resistance protein MdtA from Salmonella paratyphi C (strain RKS4594).